Here is a 271-residue protein sequence, read N- to C-terminus: MCCDISKTLCVKPFIDPEEEISHRVSFLADYLRHSRASGYVLGISGGQDSALAGRLCQIAVESVRSIGFDATLWAIRLPYGQQFDESDAQTAMQFISPDEELSFDIRSATDNLCVDLNRSLGSKISDFNRGNIKARLRMVVQYAVAAHHDALVVGTDHAAEAVTGFFTKFGDGAADILPLYGLTKGQGRALLKALGACDSIIEKVPTADLLDDLPCLPDETELGLQYRDIDAFLEGKPVSEDITMAITERYKSTLHKRMPPITPHSTWWRK.

43–50 (GISGGQDS) contacts ATP. Asp49 is a Mg(2+) binding site. Position 136 (Arg136) interacts with deamido-NAD(+). Thr156 is a binding site for ATP. Glu161 is a binding site for Mg(2+). Residues Lys169 and Asp176 each coordinate deamido-NAD(+). The ATP site is built by Lys185 and Thr207. 256 to 257 (HK) contacts deamido-NAD(+).

Belongs to the NAD synthetase family. Homodimer.

It carries out the reaction deamido-NAD(+) + NH4(+) + ATP = AMP + diphosphate + NAD(+) + H(+). It participates in cofactor biosynthesis; NAD(+) biosynthesis; NAD(+) from deamido-NAD(+) (ammonia route): step 1/1. Its function is as follows. Catalyzes the ATP-dependent amidation of deamido-NAD to form NAD. Uses ammonia as a nitrogen source. In Tropheryma whipplei (strain TW08/27) (Whipple's bacillus), this protein is NH(3)-dependent NAD(+) synthetase.